The sequence spans 493 residues: 3-octaprenyl-4-hydroxybenzoate carboxy-lyase (493 aa).

Asn172 serves as a coordination point for Mn(2+). Residues 175-177, 189-191, and 194-195 contribute to the prenylated FMN site; these read IYR, RWL, and RG. Residue Glu238 participates in Mn(2+) binding. Asp287 (proton donor) is an active-site residue.

This sequence belongs to the UbiD family. As to quaternary structure, homohexamer. Requires prenylated FMN as cofactor. Mn(2+) serves as cofactor.

Its subcellular location is the cell membrane. It catalyses the reaction a 4-hydroxy-3-(all-trans-polyprenyl)benzoate + H(+) = a 2-(all-trans-polyprenyl)phenol + CO2. It participates in cofactor biosynthesis; ubiquinone biosynthesis. Catalyzes the decarboxylation of 3-octaprenyl-4-hydroxy benzoate to 2-octaprenylphenol, an intermediate step in ubiquinone biosynthesis. The chain is 3-octaprenyl-4-hydroxybenzoate carboxy-lyase from Shewanella sediminis (strain HAW-EB3).